We begin with the raw amino-acid sequence, 102 residues long: Synaptobrevin-like protein 5 (102 aa).

The region spanning 17 to 77 (KIMRTRRELD…VKIKREMSWK (61 aa)) is the v-SNARE coiled-coil homology domain.

In Caenorhabditis elegans, this protein is Synaptobrevin-like protein 5 (snb-5).